The following is a 158-amino-acid chain: uncharacterized protein (158 aa).

Belongs to the mimivirus L223/L227/L812 family.

This is an uncharacterized protein from Acanthamoeba polyphaga mimivirus (APMV).